The primary structure comprises 1331 residues: ABC multidrug transporter MDR2 (1331 aa).

Basic and acidic residues-rich tracts occupy residues 1-20 (MVEVSEKPNTQDDGVSKQEN) and 31-41 (SDKEKVAKKGN). The disordered stretch occupies residues 1–51 (MVEVSEKPNTQDDGVSKQENRNPASSSSSTSDKEKVAKKGNSDATKSSTPE). Transmembrane regions (helical) follow at residues 93–113 (MIFLAIVSLASIAAGAALPLF), 147–167 (YFVYLGIAQFILLYVSTVGFI), 219–239 (KVGLTLTALSTFFSAFIIGYV), and 242–262 (WKLALICSSTIVAMILVMGGI). The ABC transmembrane type-1 1 domain occupies 97–387 (AIVSLASIAA…VAPNTQAFAS (291 aa)). Residue Asn-293 is glycosylated (N-linked (GlcNAc...) asparagine). 2 helical membrane passes run 325-345 (LGIMFGSMMAIMYSNYGLGFW) and 358-378 (LSAIVNILLAIVIGSFSIGNV). The region spanning 422 to 667 (IEFRGIKHIY…KGTYLQLVEA (246 aa)) is the ABC transporter 1 domain. 457–464 (GPSGSGKS) is an ATP binding site. 2 N-linked (GlcNAc...) asparagine glycosylation sites follow: Asn-529 and Asn-737. The next 2 membrane-spanning stretches (helical) occupy residues 762–782 (LCGFFFAVLSGAGQPVQSVFF) and 810–830 (FLMLGLVQLVTQSAQGVIFAI). In terms of domain architecture, ABC transmembrane type-1 2 spans 764-1051 (GFFFAVLSGA…VFSFSPDMGK (288 aa)). A glycan (N-linked (GlcNAc...) asparagine) is linked at Asn-860. Transmembrane regions (helical) follow at residues 884-904 (LGTILMVSTTLIVALTVALAF), 910-930 (LVCISTVPVLLLCGFYRFWIL), 995-1015 (ASQSFSFFCLALGFWYGGGLL), and 1025-1045 (FFLCISCVIFGSQSAGIVFSF). The ABC transporter 2 domain occupies 1086-1324 (IEFRDVHFRY…KGRYYELVHM (239 aa)). Asn-1108 carries N-linked (GlcNAc...) asparagine glycosylation. Position 1121–1128 (1121–1128 (GPSGCGKS)) interacts with ATP.

It belongs to the ABC transporter superfamily. ABCB family. Multidrug resistance exporter (TC 3.A.1.201) subfamily.

The protein localises to the cell membrane. The catalysed reaction is itraconazole(in) + ATP + H2O = itraconazole(out) + ADP + phosphate + H(+). Its function is as follows. Pleiotropic ABC efflux transporter that may be involved in the modulation susceptibility to a wide range of unrelated cytotoxic compounds. The polypeptide is ABC multidrug transporter MDR2 (Trichophyton equinum (strain ATCC MYA-4606 / CBS 127.97) (Horse ringworm fungus)).